The following is a 461-amino-acid chain: MKTYDLIVIGTGPGGYPAAIRGAQLGLKVLAVEAAEVGGVCLNVGCIPTKALLHAAETVHHLKGAEGFGLKAKPELDLKKLGAWRDGVVKKLTGGVAGLLKGNKVELLRGFARFKGPREIEVNGETYGAQSFIIATGSEPMPLKGFPFGEDVWDSTRALRVEEGIPKRLLVIGGGAVGLELGQIYHRLGSEVTLIEYMPEILPAGDRETAALLRKALEKEGLKVRTGTKAVGYEKKQDGLHVLLEAAQGGSQEEIVVDKILVAVGRRPRTEGLGLEKAGVKVDERGFIQVNARMETSAPGVYAIGDVARPPLLAHKAMKEGLVAAENAAGKNALFDFQVPSVVYTGPEWAGVGLTEEEARKAGYNVKVGKFPFSASGRALTLGGAEGLIKVVGDAETDLLLGVFVVGPQAGELIAEATLALEMGATVSDLGLTIHPHPTLSEGLMEAAEALHKQAIHILNR.

FAD is bound by residues 33–41 (EAAEVGGVC), Lys-50, and Ala-112. Cysteines 41 and 46 form a disulfide. NAD(+)-binding positions include 173 to 177 (GGGAV), Glu-196, and 263 to 266 (AVGR). FAD-binding residues include Asp-306 and Ala-314. The Proton acceptor role is filled by His-437.

The protein belongs to the class-I pyridine nucleotide-disulfide oxidoreductase family. In terms of assembly, homodimer. FAD serves as cofactor.

It localises to the membrane. It catalyses the reaction N(6)-[(R)-dihydrolipoyl]-L-lysyl-[protein] + NAD(+) = N(6)-[(R)-lipoyl]-L-lysyl-[protein] + NADH + H(+). Has chromate reductase activity. The protein is Dihydrolipoyl dehydrogenase of Thermus scotoductus (strain ATCC 700910 / SA-01).